A 377-amino-acid polypeptide reads, in one-letter code: WAT1-related protein At5g13670 (377 aa).

The next 10 helical transmembrane spans lie at Phe-9–Ala-29, Val-38–Leu-58, Pro-64–Val-84, Thr-99–Phe-119, Val-136–Ile-156, Ile-187–Leu-207, Leu-214–Ile-234, Leu-251–Ala-271, Phe-279–Phe-299, and Val-303–Trp-323. EamA domains lie at Leu-18 to Thr-149 and Phe-194 to Leu-322.

It belongs to the drug/metabolite transporter (DMT) superfamily. Plant drug/metabolite exporter (P-DME) (TC 2.A.7.4) family.

It is found in the membrane. This chain is WAT1-related protein At5g13670, found in Arabidopsis thaliana (Mouse-ear cress).